A 196-amino-acid polypeptide reads, in one-letter code: Molybdenum cofactor guanylyltransferase (196 aa).

GTP is bound by residues 10–12 (LAG), K23, N51, D69, and D99. D99 contributes to the Mg(2+) binding site.

The protein belongs to the MobA family. Monomer. Mg(2+) is required as a cofactor.

Its subcellular location is the cytoplasm. The enzyme catalyses Mo-molybdopterin + GTP + H(+) = Mo-molybdopterin guanine dinucleotide + diphosphate. Its function is as follows. Transfers a GMP moiety from GTP to Mo-molybdopterin (Mo-MPT) cofactor (Moco or molybdenum cofactor) to form Mo-molybdopterin guanine dinucleotide (Mo-MGD) cofactor. This chain is Molybdenum cofactor guanylyltransferase, found in Shewanella loihica (strain ATCC BAA-1088 / PV-4).